The chain runs to 146 residues: 3-hydroxyacyl-[acyl-carrier-protein] dehydratase FabZ (146 aa).

Histidine 48 is an active-site residue.

This sequence belongs to the thioester dehydratase family. FabZ subfamily.

It localises to the cytoplasm. It catalyses the reaction a (3R)-hydroxyacyl-[ACP] = a (2E)-enoyl-[ACP] + H2O. Involved in unsaturated fatty acids biosynthesis. Catalyzes the dehydration of short chain beta-hydroxyacyl-ACPs and long chain saturated and unsaturated beta-hydroxyacyl-ACPs. This Paracidovorax citrulli (strain AAC00-1) (Acidovorax citrulli) protein is 3-hydroxyacyl-[acyl-carrier-protein] dehydratase FabZ.